Reading from the N-terminus, the 258-residue chain is UPF0246 protein YaaA (258 aa).

It belongs to the UPF0246 family.

The chain is UPF0246 protein YaaA from Escherichia coli O8 (strain IAI1).